The chain runs to 123 residues: Small ribosomal subunit protein uS12 (123 aa).

Residues Met-1–Pro-28 form a disordered region. Position 89 is a 3-methylthioaspartic acid (Asp-89).

It belongs to the universal ribosomal protein uS12 family. As to quaternary structure, part of the 30S ribosomal subunit. Contacts proteins S8 and S17. May interact with IF1 in the 30S initiation complex.

Functionally, with S4 and S5 plays an important role in translational accuracy. Its function is as follows. Interacts with and stabilizes bases of the 16S rRNA that are involved in tRNA selection in the A site and with the mRNA backbone. Located at the interface of the 30S and 50S subunits, it traverses the body of the 30S subunit contacting proteins on the other side and probably holding the rRNA structure together. The combined cluster of proteins S8, S12 and S17 appears to hold together the shoulder and platform of the 30S subunit. This is Small ribosomal subunit protein uS12 from Cereibacter sphaeroides (strain ATCC 17029 / ATH 2.4.9) (Rhodobacter sphaeroides).